The following is a 344-amino-acid chain: Endo-1,4-beta-xylanase UM03411 (344 aa).

An N-terminal signal peptide occupies residues M1 to A21. In terms of domain architecture, GH10 spans Q35–T338. E166 (proton donor) is an active-site residue. N171 carries an N-linked (GlcNAc...) asparagine glycan. E275 functions as the Nucleophile in the catalytic mechanism. C293 and C299 form a disulfide bridge. N-linked (GlcNAc...) asparagine glycosylation is found at N310 and N323.

It belongs to the glycosyl hydrolase 10 (cellulase F) family.

The protein localises to the secreted. It catalyses the reaction Endohydrolysis of (1-&gt;4)-beta-D-xylosidic linkages in xylans.. The protein operates within glycan degradation; xylan degradation. Endo-1,4-beta-xylanase involved in the hydrolysis of xylan, a major structural heterogeneous polysaccharide found in plant biomass representing the second most abundant polysaccharide in the biosphere, after cellulose. The protein is Endo-1,4-beta-xylanase UM03411 of Mycosarcoma maydis (Corn smut fungus).